The sequence spans 65 residues: UPF0434 protein HSM_0997 (65 aa).

Belongs to the UPF0434 family.

The sequence is that of UPF0434 protein HSM_0997 from Histophilus somni (strain 2336) (Haemophilus somnus).